The sequence spans 551 residues: Tetrachloroethene reductive dehalogenase (551 aa).

The segment at residues 1–39 (MGEINRRNFLKVSILGAAAAAVASASAVKGMVSPLVADA) is a signal peptide (tat-type signal). The region spanning 411–440 (PRKFGVREFCRLCKKCADACPAQAISHEKD) is the 4Fe-4S ferredoxin-type 1 domain. 8 residues coordinate [4Fe-4S] cluster: Cys420, Cys423, Cys426, Cys430, Cys467, Cys478, Cys481, and Cys485. Residues 478–496 (CSNCVAVCSWNKVETWNHD) form the 4Fe-4S ferredoxin-type 2 domain.

This sequence belongs to the PceA family. The cofactor is [4Fe-4S] cluster. Corrinoid serves as cofactor. In terms of processing, predicted to be exported by the Tat system. The position of the signal peptide cleavage has been experimentally proven.

The protein localises to the cytoplasm. The protein resides in the cell membrane. It is found in the secreted. It carries out the reaction trichloroethene + chloride + A + H(+) = tetrachloroethene + AH2. The enzyme catalyses trichloroethene + AH2 = (Z)-1,2-dichloroethene + chloride + A + H(+). PceT is required as a chaperone for prePceA maturation. In the absence or presence of exogenous vitamin B12, the intracellular corrinoid level decreases in fumarate-grown cells and the PceA precursor forms catalytically inactive, corrinoid-free multiprotein aggregates. Exogenous vitamin B12 is not incorporated into the PceA precursor, even though it affects the transposition of the pce gene cluster. Functionally, catalyzes the reductive dechlorination of tetrachloroethene (PCE) to trichloroethene (TCE) and of trichloroethene to cis-1,2-dichloroethene (DCE). Can also use various chlorinated ethanes such as tetrachloroethane, pentachloroethane and hexachloroethane. Reduced methyl viologen can act as the artificial electron donor. This is Tetrachloroethene reductive dehalogenase from Desulfitobacterium hafniense (strain Y51).